The sequence spans 200 residues: Cytochrome c biogenesis ATP-binding export protein CcmA (200 aa).

The 199-residue stretch at 2–200 (LDVIELDFDY…NKADYEEYHL (199 aa)) folds into the ABC transporter domain. Position 34–41 (34–41 (GSNGAGKT)) interacts with ATP.

This sequence belongs to the ABC transporter superfamily. CcmA exporter (TC 3.A.1.107) family. The complex is composed of two ATP-binding proteins (CcmA) and two transmembrane proteins (CcmB).

It is found in the cell inner membrane. The catalysed reaction is heme b(in) + ATP + H2O = heme b(out) + ADP + phosphate + H(+). Its function is as follows. Part of the ABC transporter complex CcmAB involved in the biogenesis of c-type cytochromes; once thought to export heme, this seems not to be the case, but its exact role is uncertain. Responsible for energy coupling to the transport system. The polypeptide is Cytochrome c biogenesis ATP-binding export protein CcmA (Legionella pneumophila).